Here is a 129-residue protein sequence, read N- to C-terminus: Follitropin subunit beta (129 aa).

A signal peptide spans 1–18 (MKSVQLCLLLWCWRAICC). Disulfide bonds link C21–C69, C35–C84, C38–C122, C46–C100, C50–C102, and C105–C112. N-linked (GlcNAc...) asparagine glycosylation is found at N25 and N42.

The protein belongs to the glycoprotein hormones subunit beta family. Heterodimer. The active follitropin is a heterodimer composed of an alpha chain/CGA shared with other hormones and a unique beta chain/FSHB shown here.

The protein resides in the secreted. Together with the alpha chain CGA constitutes follitropin, the follicle-stimulating hormone, and provides its biological specificity to the hormone heterodimer. Binds FSHR, a G protein-coupled receptor, on target cells to activate downstream signaling pathways. Follitropin is involved in follicle development and spermatogenesis in reproductive organs. The polypeptide is Follitropin subunit beta (FSHB) (Meriones unguiculatus (Mongolian jird)).